Reading from the N-terminus, the 301-residue chain is Ornithine carbamoyltransferase (301 aa).

Carbamoyl phosphate is bound by residues Arg-100 and His-127 to Gln-130. Residues Asn-158, Asp-221, and Ser-225–Met-226 each bind L-ornithine. Residues Cys-260 and Arg-288 each contribute to the carbamoyl phosphate site.

This sequence belongs to the aspartate/ornithine carbamoyltransferase superfamily. OTCase family.

The protein resides in the cytoplasm. It carries out the reaction carbamoyl phosphate + L-ornithine = L-citrulline + phosphate + H(+). It participates in amino-acid biosynthesis; L-arginine biosynthesis; L-arginine from L-ornithine and carbamoyl phosphate: step 1/3. In terms of biological role, reversibly catalyzes the transfer of the carbamoyl group from carbamoyl phosphate (CP) to the N(epsilon) atom of ornithine (ORN) to produce L-citrulline. The chain is Ornithine carbamoyltransferase (argF) from Vibrio sp. (strain 2693).